A 150-amino-acid chain; its full sequence is Transcription antitermination protein NusB (150 aa).

The protein belongs to the NusB family.

In terms of biological role, involved in transcription antitermination. Required for transcription of ribosomal RNA (rRNA) genes. Binds specifically to the boxA antiterminator sequence of the ribosomal RNA (rrn) operons. The polypeptide is Transcription antitermination protein NusB (Streptococcus pyogenes serotype M4 (strain MGAS10750)).